The following is a 239-amino-acid chain: Uridylate kinase (239 aa).

12 to 15 is a binding site for ATP; that stretch reads KLSG. Gly-54 contributes to the UMP binding site. ATP contacts are provided by Gly-55 and Arg-59. UMP-binding positions include Asp-74 and 135 to 142; that span reads TGNPYFTT. Thr-162, Tyr-168, and Asp-171 together coordinate ATP.

This sequence belongs to the UMP kinase family. In terms of assembly, homohexamer.

The protein resides in the cytoplasm. The catalysed reaction is UMP + ATP = UDP + ADP. Its pathway is pyrimidine metabolism; CTP biosynthesis via de novo pathway; UDP from UMP (UMPK route): step 1/1. Its activity is regulated as follows. Inhibited by UTP. In terms of biological role, catalyzes the reversible phosphorylation of UMP to UDP. This Fusobacterium nucleatum subsp. nucleatum (strain ATCC 25586 / DSM 15643 / BCRC 10681 / CIP 101130 / JCM 8532 / KCTC 2640 / LMG 13131 / VPI 4355) protein is Uridylate kinase.